The primary structure comprises 341 residues: Tryptophan--tRNA ligase (341 aa).

ATP is bound by residues 11 to 13 and 19 to 20; these read RPT and GH. Residues 12-20 carry the 'HIGH' region motif; that stretch reads PTGKLHIGH. Asp140 provides a ligand contact to L-tryptophan. Residues 152–154, Leu194, and 202–206 each bind ATP; these read GND and KMSKS. The 'KMSKS' region motif lies at 202-206; the sequence is KMSKS.

The protein belongs to the class-I aminoacyl-tRNA synthetase family. As to quaternary structure, homodimer.

It is found in the cytoplasm. The enzyme catalyses tRNA(Trp) + L-tryptophan + ATP = L-tryptophyl-tRNA(Trp) + AMP + diphosphate + H(+). Catalyzes the attachment of tryptophan to tRNA(Trp). The chain is Tryptophan--tRNA ligase from Lactococcus lactis subsp. lactis (strain IL1403) (Streptococcus lactis).